The following is a 319-amino-acid chain: Type II methyltransferase M.MpnI (319 aa).

This sequence belongs to the N(4)/N(6)-methyltransferase family.

It catalyses the reaction a 2'-deoxyadenosine in DNA + S-adenosyl-L-methionine = an N(6)-methyl-2'-deoxyadenosine in DNA + S-adenosyl-L-homocysteine + H(+). Its function is as follows. A methylase that recognizes the double-stranded sequence 5'-CTAT-3' and methylates A-3 on one strand; probably responsible for all of the methylation on this site in the genome. The sequence is that of Type II methyltransferase M.MpnI from Mycoplasma pneumoniae (strain ATCC 29342 / M129 / Subtype 1) (Mycoplasmoides pneumoniae).